The primary structure comprises 284 residues: Tropomyosin (284 aa).

A coiled-coil region spans residues 1 to 284 (MDAIKKKMQA…DMTFTELIGN (284 aa)).

Belongs to the tropomyosin family. Homodimer.

Tropomyosin, in association with the troponin complex, plays a central role in the calcium dependent regulation of muscle contraction. In Blattella germanica (German cockroach), this protein is Tropomyosin.